Reading from the N-terminus, the 589-residue chain is Aspartate--tRNA ligase (589 aa).

E174 serves as a coordination point for L-aspartate. The segment at 198–201 is aspartate; that stretch reads QLFK. R220 is a binding site for L-aspartate. Residues 220-222 and Q229 contribute to the ATP site; that span reads RDE. H448 serves as a coordination point for L-aspartate. E483 contacts ATP. An L-aspartate-binding site is contributed by R490. 535–538 lines the ATP pocket; that stretch reads GIDR.

This sequence belongs to the class-II aminoacyl-tRNA synthetase family. Type 1 subfamily. Homodimer.

It is found in the cytoplasm. The enzyme catalyses tRNA(Asp) + L-aspartate + ATP = L-aspartyl-tRNA(Asp) + AMP + diphosphate. Functionally, catalyzes the attachment of L-aspartate to tRNA(Asp) in a two-step reaction: L-aspartate is first activated by ATP to form Asp-AMP and then transferred to the acceptor end of tRNA(Asp). This is Aspartate--tRNA ligase from Xylella fastidiosa (strain 9a5c).